Consider the following 111-residue polypeptide: Phosphoribosyl-ATP pyrophosphatase (111 aa).

The protein belongs to the PRA-PH family.

The protein resides in the cytoplasm. It catalyses the reaction 1-(5-phospho-beta-D-ribosyl)-ATP + H2O = 1-(5-phospho-beta-D-ribosyl)-5'-AMP + diphosphate + H(+). It participates in amino-acid biosynthesis; L-histidine biosynthesis; L-histidine from 5-phospho-alpha-D-ribose 1-diphosphate: step 2/9. The sequence is that of Phosphoribosyl-ATP pyrophosphatase from Pseudomonas entomophila (strain L48).